Consider the following 179-residue polypeptide: Adenine phosphoribosyltransferase (179 aa).

The protein belongs to the purine/pyrimidine phosphoribosyltransferase family. As to quaternary structure, homodimer.

Its subcellular location is the cytoplasm. The enzyme catalyses AMP + diphosphate = 5-phospho-alpha-D-ribose 1-diphosphate + adenine. It functions in the pathway purine metabolism; AMP biosynthesis via salvage pathway; AMP from adenine: step 1/1. Catalyzes a salvage reaction resulting in the formation of AMP, that is energically less costly than de novo synthesis. The protein is Adenine phosphoribosyltransferase of Haemophilus ducreyi (strain 35000HP / ATCC 700724).